Here is a 335-residue protein sequence, read N- to C-terminus: Glyceraldehyde-3-phosphate dehydrogenase 2 (335 aa).

NAD(+) contacts are provided by residues 13 to 14 (RI), Asp34, and Met79. Residues 151–153 (SCT), Thr182, 211–212 (TG), and Arg234 each bind D-glyceraldehyde 3-phosphate. Catalysis depends on Cys152, which acts as the Nucleophile. Asn316 is a binding site for NAD(+).

The protein belongs to the glyceraldehyde-3-phosphate dehydrogenase family. Homotetramer.

The protein resides in the cytoplasm. The enzyme catalyses D-glyceraldehyde 3-phosphate + phosphate + NAD(+) = (2R)-3-phospho-glyceroyl phosphate + NADH + H(+). It participates in carbohydrate degradation; glycolysis; pyruvate from D-glyceraldehyde 3-phosphate: step 1/5. Its function is as follows. Glyceraldehyde-3-phosphate dehydrogenase is a key enzyme in glycolysis that catalyzes the first step of the pathway by converting D-glyceraldehyde 3-phosphate (G3P) into 3-phospho-D-glyceroyl phosphate. The sequence is that of Glyceraldehyde-3-phosphate dehydrogenase 2 (gapdh-2) from Danio rerio (Zebrafish).